Consider the following 160-residue polypeptide: Eukaryotic translation initiation factor 5A-4 (160 aa).

Over residues 1–12 (MSDEEHHFESKA) the composition is skewed to basic and acidic residues. The disordered stretch occupies residues 1 to 21 (MSDEEHHFESKADAGASKTYP). K52 is modified (hypusine).

The protein belongs to the eIF-5A family. Lys-52 undergoes hypusination, a unique post-translational modification that consists in the addition of a butylamino group from spermidine to lysine side chain, leading to the formation of the unusual amino acid hypusine. eIF-5As are the only known proteins to undergo this modification, which is essential for their function.

In terms of biological role, translation factor that promotes translation elongation and termination, particularly upon ribosome stalling at specific amino acid sequence contexts. Binds between the exit (E) and peptidyl (P) site of the ribosome and promotes rescue of stalled ribosome: specifically required for efficient translation of polyproline-containing peptides as well as other motifs that stall the ribosome. Acts as a ribosome quality control (RQC) cofactor by joining the RQC complex to facilitate peptidyl transfer during CAT tailing step. This Solanum lycopersicum (Tomato) protein is Eukaryotic translation initiation factor 5A-4.